Reading from the N-terminus, the 259-residue chain is Small ribosomal subunit protein uS2 (259 aa).

Belongs to the universal ribosomal protein uS2 family.

The sequence is that of Small ribosomal subunit protein uS2 from Streptococcus pneumoniae serotype 4 (strain ATCC BAA-334 / TIGR4).